Consider the following 89-residue polypeptide: MISSVKLNLILVLSLSTMHVFWCYPVPSSKVSGKSDYFLILLNSCPTRLDRSKELAFLKPILEKMFVKRSFRNGVGTGMKKTSFQRAKS.

The signal sequence occupies residues Met-1–Cys-23. The propeptide occupies Tyr-24 to Val-67.

It localises to the secreted. Its function is as follows. Modulates arousal and anxiety. May play an important anorexigenic role. Binds to its receptor NPSR1 with nanomolar affinity to increase intracellular calcium concentrations. The chain is Neuropeptide S (NPS) from Homo sapiens (Human).